We begin with the raw amino-acid sequence, 423 residues long: NDP-N-acetyl-D-galactosaminuronic acid dehydrogenase (423 aa).

11–28 (TISVVGLGYIGLPTATVL) contributes to the NAD(+) binding site. The Proton donor/acceptor role is filled by K218. C272 serves as the catalytic Nucleophile.

The protein belongs to the UDP-glucose/GDP-mannose dehydrogenase family.

Its function is as follows. Probably involved in synthesis of sugar components of EPS I, by converting NDP-N-acetyl-D-galactosamine into NDP-N-acetyl-D-galactosaminuronic acid. The polypeptide is NDP-N-acetyl-D-galactosaminuronic acid dehydrogenase (epsD) (Ralstonia solanacearum (Pseudomonas solanacearum)).